The chain runs to 310 residues: Beta-carotene 3-hydroxylase 1, chloroplastic (310 aa).

A chloroplast-targeting transit peptide spans 1–51; the sequence is MAAGLSTAVTFKPLHRSFSSSSTDFRLRLPKSLSGFSPSLRFKRFSVCYVV. Transmembrane regions (helical) follow at residues 98–118 and 132–152; these read YLIA…MAVY and MLEM…MEFW. One can recognise a Fatty acid hydroxylase domain in the interval 145–272; that stretch reads AAVGMEFWAR…KFNGVPYGLF (128 aa). Positions 157 to 162 match the Histidine box-1 motif; the sequence is HRALWH. Residues 169–173 carry the Histidine box-2 motif; it reads HESHH. The next 2 membrane-spanning stretches (helical) occupy residues 183-203 and 208-228; these read NDVF…YGFF and VPGL…AYMF. The short motif at 230 to 235 is the Histidine box-3 element; it reads HDGLVH. The Histidine box-4 motif lies at 256–260; the sequence is HQLHH.

Belongs to the sterol desaturase family. Homodimer. Expressed in leaves, flowers, stems, roots and siliques.

Its subcellular location is the plastid. The protein resides in the chloroplast membrane. It catalyses the reaction all-trans-beta-carotene + 4 reduced [2Fe-2S]-[ferredoxin] + 2 O2 + 4 H(+) = all-trans-zeaxanthin + 4 oxidized [2Fe-2S]-[ferredoxin] + 2 H2O. Nonheme diiron monooxygenase involved in the biosynthesis of xanthophylls. Specific for beta-ring hydroxylations of beta-carotene. Also has a low activity toward the beta- and epsilon-rings of alpha-carotene. No activity with acyclic carotenoids such as lycopene and neurosporene. Uses ferredoxin as an electron donor. This Arabidopsis thaliana (Mouse-ear cress) protein is Beta-carotene 3-hydroxylase 1, chloroplastic (BETA-OHASE 1).